Consider the following 1104-residue polypeptide: General transcription factor II-I repeat domain-containing protein 1 (1104 aa).

Residues K27, K184, K212, K225, K238, K271, K337, K436, K439, and K443 each participate in a glycyl lysine isopeptide (Lys-Gly) (interchain with G-Cter in SUMO2) cross-link. Residues 119-213 (LEQCSDVYLL…PDDGGQDTKA (95 aa)) form a GTF2I-like 1 repeat. Residues 342–436 (IKEMEDINTL…FDERIFTGNK (95 aa)) form a GTF2I-like 2 repeat. Phosphoserine is present on S448. The segment at 509-559 (SDPSPTSEEMTDSLPGHLPSEDSGYGMEMPADKGPSEEPWSEERPAEESPG) is disordered. Over residues 538-555 (PADKGPSEEPWSEERPAE) the composition is skewed to basic and acidic residues. A GTF2I-like 3 repeat occupies 556–650 (ESPGDVIRPL…ELLTDGVKEP (95 aa)). Residues K567, K579, K588, K622, K638, K669, K709, K717, K757, K759, and K772 each participate in a glycyl lysine isopeptide (Lys-Gly) (interchain with G-Cter in SUMO2) cross-link. The GTF2I-like 4 repeat unit spans residues 681–775 (LSRIDIANTL…FQGLIPKPET (95 aa)). Positions 783–802 (EAGKTTRPRRLQQDTWQPDE) are disordered. One copy of the GTF2I-like 5 repeat lies at 805–899 (ANRLGEKVIL…LQPFAEVCND (95 aa)). Glycyl lysine isopeptide (Lys-Gly) (interchain with G-Cter in SUMO2) cross-links involve residues K841 and K901. One copy of the GTF2I-like 6 repeat lies at 908-1002 (SNKLGKKVIL…LQPFGDVCNN (95 aa)). 2 disordered regions span residues 1001–1044 (NNAK…VAST) and 1058–1104 (LHPN…LPTR). The Nuclear localization signal signature appears at 1012-1019 (PKRKRKRV). The span at 1021-1043 (EGNSVSSSSSSSSSSSNPESVAS) shows a compositional bias: low complexity.

Belongs to the TFII-I family. Interacts with the retinoblastoma protein (RB1) via its C-terminus. As to expression, widely expressed.

It localises to the nucleus. Its function is as follows. May be a transcription regulator involved in cell-cycle progression and skeletal muscle differentiation. May repress GTF2I transcriptional functions, by preventing its nuclear residency, or by inhibiting its transcriptional activation. May contribute to slow-twitch fiber type specificity during myogenesis and in regenerating muscles. Binds troponin I slow-muscle fiber enhancer (USE B1). Binds specifically and with high affinity to the EFG sequences derived from the early enhancer of HOXC8. This chain is General transcription factor II-I repeat domain-containing protein 1 (Gtf2ird1), found in Mus musculus (Mouse).